The following is a 210-amino-acid chain: Imidazole glycerol phosphate synthase subunit HisH (210 aa).

The region spanning 3 to 210 (KVALLDYGSG…QLLRNWIDLL (208 aa)) is the Glutamine amidotransferase type-1 domain. C81 (nucleophile) is an active-site residue. Catalysis depends on residues H191 and E193.

In terms of assembly, heterodimer of HisH and HisF.

The protein localises to the cytoplasm. It catalyses the reaction 5-[(5-phospho-1-deoxy-D-ribulos-1-ylimino)methylamino]-1-(5-phospho-beta-D-ribosyl)imidazole-4-carboxamide + L-glutamine = D-erythro-1-(imidazol-4-yl)glycerol 3-phosphate + 5-amino-1-(5-phospho-beta-D-ribosyl)imidazole-4-carboxamide + L-glutamate + H(+). It carries out the reaction L-glutamine + H2O = L-glutamate + NH4(+). It functions in the pathway amino-acid biosynthesis; L-histidine biosynthesis; L-histidine from 5-phospho-alpha-D-ribose 1-diphosphate: step 5/9. IGPS catalyzes the conversion of PRFAR and glutamine to IGP, AICAR and glutamate. The HisH subunit catalyzes the hydrolysis of glutamine to glutamate and ammonia as part of the synthesis of IGP and AICAR. The resulting ammonia molecule is channeled to the active site of HisF. In Corynebacterium diphtheriae (strain ATCC 700971 / NCTC 13129 / Biotype gravis), this protein is Imidazole glycerol phosphate synthase subunit HisH.